The sequence spans 201 residues: Histone chaperone asf1a-A (201 aa).

It belongs to the ASF1 family. In terms of assembly, interacts with histone H3 (including both histone H3.1 and H3.3) and histone H4. Interacts with hira and p60.

It is found in the nucleus. Functionally, histone chaperone that facilitates histone deposition and histone exchange and removal during nucleosome assembly and disassembly. Not critical for histone deposition during nucleosome assembly. This chain is Histone chaperone asf1a-A (asf1aa), found in Xenopus laevis (African clawed frog).